The sequence spans 260 residues: 3'-5' ssDNA/RNA exonuclease TatD (260 aa).

Glutamate 91, histidine 127, and histidine 152 together coordinate a divalent metal cation.

Belongs to the metallo-dependent hydrolases superfamily. TatD-type hydrolase family. TatD subfamily. In terms of assembly, monomer. Mg(2+) serves as cofactor.

The protein resides in the cytoplasm. 3'-5' exonuclease that prefers single-stranded DNA and RNA. May play a role in the H(2)O(2)-induced DNA damage repair. In Citrobacter koseri (strain ATCC BAA-895 / CDC 4225-83 / SGSC4696), this protein is 3'-5' ssDNA/RNA exonuclease TatD.